The sequence spans 207 residues: Ribosomal RNA small subunit methyltransferase G (207 aa).

S-adenosyl-L-methionine-binding positions include G73, L78, 124–125 (VE), and R139.

The protein belongs to the methyltransferase superfamily. RNA methyltransferase RsmG family.

The protein localises to the cytoplasm. It catalyses the reaction guanosine(527) in 16S rRNA + S-adenosyl-L-methionine = N(7)-methylguanosine(527) in 16S rRNA + S-adenosyl-L-homocysteine. Specifically methylates the N7 position of guanine in position 527 of 16S rRNA. This chain is Ribosomal RNA small subunit methyltransferase G, found in Salmonella arizonae (strain ATCC BAA-731 / CDC346-86 / RSK2980).